Here is a 71-residue protein sequence, read N- to C-terminus: Large ribosomal subunit protein bL31 (71 aa).

Positions 16, 18, 36, and 39 each coordinate Zn(2+).

The protein belongs to the bacterial ribosomal protein bL31 family. Type A subfamily. As to quaternary structure, part of the 50S ribosomal subunit. Zn(2+) is required as a cofactor.

Its function is as follows. Binds the 23S rRNA. This chain is Large ribosomal subunit protein bL31, found in Thermotoga maritima (strain ATCC 43589 / DSM 3109 / JCM 10099 / NBRC 100826 / MSB8).